The sequence spans 892 residues: Translation initiation factor IF-2 (892 aa).

A disordered region spans residues 88–305; it reads KKRTFVKRDP…SLQQGFQKPA (218 aa). Basic and acidic residues-rich tracts occupy residues 93–159 and 166–216; these read VKRD…KDKV and DMTK…EENK. Residues 254 to 269 are compositionally biased toward basic residues; the sequence is GRGRNAKAARPAKKGK. The segment covering 270-282 has biased composition (basic and acidic residues); it reads HAESKADREEARA. Residues 391-560 enclose the tr-type G domain; it reads PRAPVVTIMG…LLQAEVLELK (170 aa). Positions 400–407 are G1; sequence GHVDHGKT. 400-407 contributes to the GTP binding site; sequence GHVDHGKT. The tract at residues 425–429 is G2; it reads GITQH. The G3 stretch occupies residues 446–449; the sequence is DTPG. GTP contacts are provided by residues 446 to 450 and 500 to 503; these read DTPGH and NKID. The segment at 500–503 is G4; the sequence is NKID. The G5 stretch occupies residues 536 to 538; the sequence is SAK.

It belongs to the TRAFAC class translation factor GTPase superfamily. Classic translation factor GTPase family. IF-2 subfamily.

It localises to the cytoplasm. One of the essential components for the initiation of protein synthesis. Protects formylmethionyl-tRNA from spontaneous hydrolysis and promotes its binding to the 30S ribosomal subunits. Also involved in the hydrolysis of GTP during the formation of the 70S ribosomal complex. This Salmonella agona (strain SL483) protein is Translation initiation factor IF-2.